The sequence spans 91 residues: Small ribosomal subunit protein uS19c (91 aa).

The protein belongs to the universal ribosomal protein uS19 family.

The protein resides in the plastid. It is found in the organellar chromatophore. In terms of biological role, protein S19 forms a complex with S13 that binds strongly to the 16S ribosomal RNA. The polypeptide is Small ribosomal subunit protein uS19c (Paulinella chromatophora).